Here is a 331-residue protein sequence, read N- to C-terminus: Adenosine deaminase (331 aa).

2 residues coordinate Zn(2+): histidine 12 and histidine 14. Residues histidine 14, aspartate 16, and glycine 170 each contribute to the substrate site. Histidine 197 is a Zn(2+) binding site. The active-site Proton donor is the glutamate 200. Zn(2+) is bound at residue aspartate 278. Aspartate 279 provides a ligand contact to substrate.

It belongs to the metallo-dependent hydrolases superfamily. Adenosine and AMP deaminases family. Adenosine deaminase subfamily. Zn(2+) is required as a cofactor.

The enzyme catalyses adenosine + H2O + H(+) = inosine + NH4(+). It carries out the reaction 2'-deoxyadenosine + H2O + H(+) = 2'-deoxyinosine + NH4(+). Its function is as follows. Catalyzes the hydrolytic deamination of adenosine and 2-deoxyadenosine. This is Adenosine deaminase from Shewanella denitrificans (strain OS217 / ATCC BAA-1090 / DSM 15013).